We begin with the raw amino-acid sequence, 291 residues long: Nucleotide-binding protein Athe_0320 (291 aa).

9 to 16 (GMSGAGKS) lines the ATP pocket. 60–63 (DIRG) is a GTP binding site.

It belongs to the RapZ-like family.

Functionally, displays ATPase and GTPase activities. The sequence is that of Nucleotide-binding protein Athe_0320 from Caldicellulosiruptor bescii (strain ATCC BAA-1888 / DSM 6725 / KCTC 15123 / Z-1320) (Anaerocellum thermophilum).